The primary structure comprises 175 residues: Inorganic pyrophosphatase (175 aa).

Positions 30, 44, and 56 each coordinate substrate. Aspartate 66, aspartate 71, and aspartate 103 together coordinate Mg(2+). Tyrosine 140 is a substrate binding site.

It belongs to the PPase family. As to quaternary structure, homohexamer. Mg(2+) is required as a cofactor.

It is found in the cytoplasm. The catalysed reaction is diphosphate + H2O = 2 phosphate + H(+). Its function is as follows. Catalyzes the hydrolysis of inorganic pyrophosphate (PPi) forming two phosphate ions. This chain is Inorganic pyrophosphatase, found in Thermus thermophilus (strain ATCC 27634 / DSM 579 / HB8).